The following is an 844-amino-acid chain: Putative ubiquitin thioesterase 232R (844 aa).

Disordered regions lie at residues 136 to 223 (NSST…DEAE), 261 to 287 (SRRK…PPME), 326 to 377 (LLNG…PELT), and 422 to 541 (QKKQ…KLSV). Over residues 137 to 216 (SSTRSRSPSV…PSRQSVRQSS (80 aa)) the composition is skewed to low complexity. Low complexity-rich tracts occupy residues 332–341 (RPSPSLPQSR) and 354–364 (RSPSVGSPSVR). Residues 429-438 (SPSPTPPSPV) show a composition bias toward pro residues. Residues 472-485 (VQKKMGKSGEREPK) are compositionally biased toward basic and acidic residues. Low complexity predominate over residues 504-518 (SLRSRLSTQQQTQQS). Positions 526 to 535 (ESIKPEESVR) are enriched in basic and acidic residues. The 136-residue stretch at 590–725 (YTVKQVSGDG…NYHYTSLVPI (136 aa)) folds into the OTU domain. Residue aspartate 598 is part of the active site. The active-site Nucleophile is cysteine 601. Histidine 718 is an active-site residue.

It carries out the reaction Thiol-dependent hydrolysis of ester, thioester, amide, peptide and isopeptide bonds formed by the C-terminal Gly of ubiquitin (a 76-residue protein attached to proteins as an intracellular targeting signal).. Functionally, hydrolase that can remove conjugated ubiquitin from proteins and may therefore play an important regulatory role at the level of protein turnover by preventing degradation. This is Putative ubiquitin thioesterase 232R from Aedes vexans (Inland floodwater mosquito).